The chain runs to 72 residues: Large ribosomal subunit protein bL28 (72 aa).

This sequence belongs to the bacterial ribosomal protein bL28 family.

This Chlorobium phaeobacteroides (strain DSM 266 / SMG 266 / 2430) protein is Large ribosomal subunit protein bL28.